Here is a 429-residue protein sequence, read N- to C-terminus: Glucose-1-phosphate adenylyltransferase (429 aa).

Alpha-D-glucose 1-phosphate-binding positions include G162, 177 to 178 (EK), and S209.

It belongs to the bacterial/plant glucose-1-phosphate adenylyltransferase family. Homotetramer.

The enzyme catalyses alpha-D-glucose 1-phosphate + ATP + H(+) = ADP-alpha-D-glucose + diphosphate. The protein operates within glycan biosynthesis; glycogen biosynthesis. In terms of biological role, involved in the biosynthesis of ADP-glucose, a building block required for the elongation reactions to produce glycogen. Catalyzes the reaction between ATP and alpha-D-glucose 1-phosphate (G1P) to produce pyrophosphate and ADP-Glc. The polypeptide is Glucose-1-phosphate adenylyltransferase (Cyanothece sp. (strain PCC 7425 / ATCC 29141)).